We begin with the raw amino-acid sequence, 365 residues long: NADH-quinone oxidoreductase subunit D (365 aa).

Belongs to the complex I 49 kDa subunit family. NDH-1 is composed of 14 different subunits. Subunits NuoB, C, D, E, F, and G constitute the peripheral sector of the complex.

Its subcellular location is the cell membrane. The enzyme catalyses a quinone + NADH + 5 H(+)(in) = a quinol + NAD(+) + 4 H(+)(out). In terms of biological role, NDH-1 shuttles electrons from NADH, via FMN and iron-sulfur (Fe-S) centers, to quinones in the respiratory chain. The immediate electron acceptor for the enzyme in this species is believed to be a menaquinone. Couples the redox reaction to proton translocation (for every two electrons transferred, four hydrogen ions are translocated across the cytoplasmic membrane), and thus conserves the redox energy in a proton gradient. In Carboxydothermus hydrogenoformans (strain ATCC BAA-161 / DSM 6008 / Z-2901), this protein is NADH-quinone oxidoreductase subunit D.